Reading from the N-terminus, the 428-residue chain is Enolase (428 aa).

Q163 contacts (2R)-2-phosphoglycerate. Residue E205 is the Proton donor of the active site. Mg(2+) contacts are provided by D242, E285, and D312. Positions 337, 366, 367, and 388 each coordinate (2R)-2-phosphoglycerate. K337 acts as the Proton acceptor in catalysis.

This sequence belongs to the enolase family. Mg(2+) serves as cofactor.

The protein resides in the cytoplasm. The protein localises to the secreted. Its subcellular location is the cell surface. It catalyses the reaction (2R)-2-phosphoglycerate = phosphoenolpyruvate + H2O. It functions in the pathway carbohydrate degradation; glycolysis; pyruvate from D-glyceraldehyde 3-phosphate: step 4/5. Catalyzes the reversible conversion of 2-phosphoglycerate (2-PG) into phosphoenolpyruvate (PEP). It is essential for the degradation of carbohydrates via glycolysis. This chain is Enolase, found in Neisseria meningitidis serogroup C / serotype 2a (strain ATCC 700532 / DSM 15464 / FAM18).